Reading from the N-terminus, the 131-residue chain is Small ribosomal subunit protein uS8 (131 aa).

The protein belongs to the universal ribosomal protein uS8 family. In terms of assembly, part of the 30S ribosomal subunit. Contacts proteins S5 and S12.

Functionally, one of the primary rRNA binding proteins, it binds directly to 16S rRNA central domain where it helps coordinate assembly of the platform of the 30S subunit. The chain is Small ribosomal subunit protein uS8 from Rhizorhabdus wittichii (strain DSM 6014 / CCUG 31198 / JCM 15750 / NBRC 105917 / EY 4224 / RW1) (Sphingomonas wittichii).